Consider the following 674-residue polypeptide: Cysteine-rich receptor-like protein kinase 6 (674 aa).

Residues 1 to 24 form the signal peptide; sequence MSSLISFNFLFLFSFLTSSFTASA. Residues 25-289 lie on the Extracellular side of the membrane; sequence QDPFYLNHYC…LPGKSGNSTV (265 aa). Gnk2-homologous domains follow at residues 28–132 and 139–245; these read FYLN…HKNI and NEGE…LYPF. 7 N-linked (GlcNAc...) asparagine glycosylation sites follow: Asn-36, Asn-43, Asn-61, Asn-70, Asn-104, Asn-178, and Asn-247. Residues 254–266 show a composition bias toward pro residues; that stretch reads PPLPPPPPPPPPR. The disordered stretch occupies residues 254–284; that stretch reads PPLPPPPPPPPPRESLVSTPPISSSSLPGKS. Low complexity predominate over residues 268-284; the sequence is SLVSTPPISSSSLPGKS. A glycan (N-linked (GlcNAc...) asparagine) is linked at Asn-286. The chain crosses the membrane as a helical span at residues 290–310; sequence LVVAVVVLAVLLFIALVGYCF. The Cytoplasmic portion of the chain corresponds to 311–674; sequence LAKKKKKTFD…DESITDLYPR (364 aa). The Protein kinase domain occupies 351 to 637; it reads FAESNKIGRG…TLPVPRQPGF (287 aa). Residues 357 to 365 and Lys-379 each bind ATP; that span reads IGRGGFGEV. The residue at position 424 (Tyr-424) is a Phosphotyrosine. The Proton acceptor role is filled by Asp-476. Ser-480 is modified (phosphoserine). A Phosphothreonine modification is found at Thr-516. Tyr-524 carries the post-translational modification Phosphotyrosine. The interval 648–674 is disordered; sequence LDSDQSTTTKSFPASIDDESITDLYPR. Positions 650–659 are enriched in polar residues; that stretch reads SDQSTTTKSF.

This sequence belongs to the protein kinase superfamily. Ser/Thr protein kinase family. CRK subfamily.

It localises to the membrane. It carries out the reaction L-seryl-[protein] + ATP = O-phospho-L-seryl-[protein] + ADP + H(+). It catalyses the reaction L-threonyl-[protein] + ATP = O-phospho-L-threonyl-[protein] + ADP + H(+). This chain is Cysteine-rich receptor-like protein kinase 6 (CRK6), found in Arabidopsis thaliana (Mouse-ear cress).